The primary structure comprises 79 residues: Reactive oxygen species modulator 1 (79 aa).

Residues 22–44 traverse the membrane as a helical segment; the sequence is GFVMGCAVGMAAGALFGPFSCLR. A sufficient for antibacterial activity region spans residues 42 to 60; sequence CLRIGMRGRELMGGIGKTM.

This sequence belongs to the MGR2 family.

It localises to the mitochondrion inner membrane. In terms of biological role, has antibacterial activity against a variety of bacteria including S.aureus, P.aeruginosa and M.tuberculosis. Acts by inducing bacterial membrane breakage. Induces production of reactive oxygen species (ROS) which are necessary for cell proliferation. May play a role in inducing oxidative DNA damage and replicative senescence. May play a role in the coordination of mitochondrial morphology and cell proliferation. This chain is Reactive oxygen species modulator 1 (ROMO1), found in Sus scrofa (Pig).